A 355-amino-acid polypeptide reads, in one-letter code: Probable F-box protein At5g36000 (355 aa).

The segment covering 1-14 (MNTRSGDAEGDIRG) has biased composition (basic and acidic residues). A disordered region spans residues 1–44 (MNTRSGDAEGDIRGKMIAPVRDGNGGQKRKLVQSNDIQRDEDGG). In terms of domain architecture, F-box; degenerate spans 78–124 (QSRFSWYEQDIWTYITRFLDGKSLVKLGATNKWFYKIAMEDTVWRFA).

This chain is Probable F-box protein At5g36000, found in Arabidopsis thaliana (Mouse-ear cress).